The primary structure comprises 215 residues: Cytochrome b6 (215 aa).

A helical transmembrane segment spans residues 32–52 (IFYCLGGITLTCFIVQVATGF). Heme c is bound at residue Cys-35. His-86 and His-100 together coordinate heme b. A run of 3 helical transmembrane segments spans residues 90 to 110 (ASMM…TGGF), 116 to 136 (LTWI…VTGY), and 186 to 206 (LHTF…FLMI). Positions 187 and 202 each coordinate heme b.

Belongs to the cytochrome b family. PetB subfamily. As to quaternary structure, the 4 large subunits of the cytochrome b6-f complex are cytochrome b6, subunit IV (17 kDa polypeptide, PetD), cytochrome f and the Rieske protein, while the 4 small subunits are PetG, PetL, PetM and PetN. The complex functions as a dimer. It depends on heme b as a cofactor. Heme c serves as cofactor.

The protein localises to the plastid. It is found in the chloroplast thylakoid membrane. In terms of biological role, component of the cytochrome b6-f complex, which mediates electron transfer between photosystem II (PSII) and photosystem I (PSI), cyclic electron flow around PSI, and state transitions. This chain is Cytochrome b6, found in Chara vulgaris (Common stonewort).